The chain runs to 101 residues: uncharacterized protein (101 aa).

The interval 39 to 74 (CDERHGRPLPHSQESQHGSATSKKAVRGTADTAPLE) is disordered. The span at 50 to 60 (SQESQHGSATS) shows a compositional bias: polar residues.

This is an uncharacterized protein from Homo sapiens (Human).